We begin with the raw amino-acid sequence, 218 residues long: MRIFLDTANIEEIKKAVAWGVIDGVTTNPTLIAREKAPFTERIKEICETVKGPVSAEVVALDYEGMVKEARDLAMLDEHVVIKIPMTPEGIKAVKTLSSEGIKTNVTLVFSAVQALLAAKAGATYVSPFIGRVDDISSDGLRLVEDIVAIFSNYGFQTNVLAASIRHPMHVLELATIGVDIVTMPFNVLEKLFHHPLTDKGIERFLNDWEEYRKGTGL.

Lys-83 functions as the Schiff-base intermediate with substrate in the catalytic mechanism.

It belongs to the transaldolase family. Type 3B subfamily.

The protein resides in the cytoplasm. The enzyme catalyses D-sedoheptulose 7-phosphate + D-glyceraldehyde 3-phosphate = D-erythrose 4-phosphate + beta-D-fructose 6-phosphate. It participates in carbohydrate degradation; pentose phosphate pathway; D-glyceraldehyde 3-phosphate and beta-D-fructose 6-phosphate from D-ribose 5-phosphate and D-xylulose 5-phosphate (non-oxidative stage): step 2/3. Its function is as follows. Transaldolase is important for the balance of metabolites in the pentose-phosphate pathway. The chain is Probable transaldolase from Kosmotoga olearia (strain ATCC BAA-1733 / DSM 21960 / TBF 19.5.1).